A 215-amino-acid polypeptide reads, in one-letter code: Kunitz trypsin inhibitor 4 (215 aa).

Residues 1-28 form the signal peptide; that stretch reads MTKTTKTMNPKFYLVLALTAVLASNAYG. Cystine bridges form between C66/C112 and C165/C176. An N-linked (GlcNAc...) asparagine glycan is attached at N206.

This sequence belongs to the protease inhibitor I3 (leguminous Kunitz-type inhibitor) family. As to expression, expressed in roots.

It is found in the endoplasmic reticulum. Its function is as follows. Exhibits Kunitz trypsin protease inhibitor activity. Involved in modulating programmed cell death (PCD) in plant-pathogen interactions. Can inhibit both serine proteases and cysteine proteases. May be involved in the modulation of the proteases that participate in the hydrolysis of dietary proteins in the gut of spider mites. The sequence is that of Kunitz trypsin inhibitor 4 from Arabidopsis thaliana (Mouse-ear cress).